The primary structure comprises 320 residues: Cytochrome f (320 aa).

The N-terminal stretch at 1 to 35 is a signal peptide; sequence MKLNSLINLIQKSIYSCTLLLIILNIICVAPNSSN. The heme site is built by Phe-37, Cys-57, Cys-60, and His-61. A helical transmembrane segment spans residues 286–306; sequence IKGMIVFFFASVLAQIFFVLK.

This sequence belongs to the cytochrome f family. In terms of assembly, the 4 large subunits of the cytochrome b6-f complex are cytochrome b6, subunit IV (17 kDa polypeptide, petD), cytochrome f and the Rieske protein, while the 4 small subunits are PetG, PetL, PetM and PetN. The complex functions as a dimer. Heme serves as cofactor.

The protein resides in the plastid. Its subcellular location is the chloroplast thylakoid membrane. Component of the cytochrome b6-f complex, which mediates electron transfer between photosystem II (PSII) and photosystem I (PSI), cyclic electron flow around PSI, and state transitions. The protein is Cytochrome f of Pyropia yezoensis (Susabi-nori).